A 407-amino-acid chain; its full sequence is ETS domain-containing protein Elk-3 (407 aa).

A DNA-binding region (ETS) is located at residues 5–85; it reads ITLWQFLLQL…IGQKFVYKFV (81 aa). Lys-92 is covalently cross-linked (Glycyl lysine isopeptide (Lys-Gly) (interchain with G-Cter in SUMO2)). Ser-115 is subject to Phosphoserine. A Glycyl lysine isopeptide (Lys-Gly) (interchain with G-Cter in SUMO2) cross-link involves residue Lys-165. Disordered stretches follow at residues 234-253 and 271-298; these read SSAS…SPLP and LEPL…KGLE. The CTBP-binding motif signature appears at 273 to 277; it reads PLNLS. Ser-396 carries the phosphoserine modification.

The protein belongs to the ETS family. Interacts with CTBP1.

Its subcellular location is the nucleus. In terms of biological role, may be a negative regulator of transcription, but can activate transcription when coexpressed with Ras, Src or Mos. Forms a ternary complex with the serum response factor and the ETS and SRF motifs of the Fos serum response element. The chain is ETS domain-containing protein Elk-3 (ELK3) from Homo sapiens (Human).